Here is a 569-residue protein sequence, read N- to C-terminus: Formate--tetrahydrofolate ligase (569 aa).

Residue 68-75 (TPAGEGKT) coordinates ATP.

The protein belongs to the formate--tetrahydrofolate ligase family.

The catalysed reaction is (6S)-5,6,7,8-tetrahydrofolate + formate + ATP = (6R)-10-formyltetrahydrofolate + ADP + phosphate. The protein operates within one-carbon metabolism; tetrahydrofolate interconversion. This is Formate--tetrahydrofolate ligase from Psychrobacter sp. (strain PRwf-1).